The primary structure comprises 515 residues: Bifunctional purine biosynthesis protein PurH (515 aa).

One can recognise an MGS-like domain in the interval 1-145 (MTKRALISVS…KNHASVTVVV (145 aa)).

It belongs to the PurH family.

The enzyme catalyses (6R)-10-formyltetrahydrofolate + 5-amino-1-(5-phospho-beta-D-ribosyl)imidazole-4-carboxamide = 5-formamido-1-(5-phospho-D-ribosyl)imidazole-4-carboxamide + (6S)-5,6,7,8-tetrahydrofolate. It catalyses the reaction IMP + H2O = 5-formamido-1-(5-phospho-D-ribosyl)imidazole-4-carboxamide. The protein operates within purine metabolism; IMP biosynthesis via de novo pathway; 5-formamido-1-(5-phospho-D-ribosyl)imidazole-4-carboxamide from 5-amino-1-(5-phospho-D-ribosyl)imidazole-4-carboxamide (10-formyl THF route): step 1/1. Its pathway is purine metabolism; IMP biosynthesis via de novo pathway; IMP from 5-formamido-1-(5-phospho-D-ribosyl)imidazole-4-carboxamide: step 1/1. In Streptococcus equi subsp. zooepidemicus (strain H70), this protein is Bifunctional purine biosynthesis protein PurH.